A 1648-amino-acid chain; its full sequence is MDFSIPPTLPLDLQSRLNELIQDYKDENLTRKGYETKRKQLLDKFEISQMRPYTPLRSPNSRKSKHLHRRNTSLASSITSLPNSIDRRHSIYRVTTINSTSANNTPRRRSKRYTASLQSSLPGSSDENGSVKDAVYNPMIPLLPRHTGAENTSSGDSAMTDSLPLILRGRFEHYDGQTAMISINSKGKETFITWDKLYLKAERVAHELNKSHLYKMDKILLWYNKNDVIEFTIALLGCFISGMAAVPVSFETYSLREILEIIKVTNSKFVLISNACHRQLDNLYSSSNHSKVKLVKNDVFQQIKFVKTDDLGTYTKAKKTSPTFDIPNISYIEFTRTPLGRLSGVVMKHNILINQFETMTKILNSRSMPHWKQKSQSIRKPFHKKIMATNSRFVILNSLDPTRSTGLIMGVLFNLFTGNLMISIDSSILQRPGGYENIIDKFRADILLNDQLQLKQVVINYLENPESAFSKKHKIDFSCIKSCLTSCTTIDTDVSEMVVHKWLKNLGCIDAPFCYSPMLTLLDFGGIFISIRDQLGNLENFPIHNSKLRLQNELFINREKLKLNEVECSITAMINSSSSFKDYLKLETFGFPIPDITLCVVNPDTNTLVQDLTVGEIWISSNHITDEFYQMDKVNEFVFKAKLNYSEMFSWAKYEMPTNEKSQAVTEQLDTILNICPANTYFMRTKLMGFVHNGKIYVLSLIEDMFLQNRLIRLPNWAHTSNLLYAKKGNQSAQPKGNTGAESTKAIDISSLSGETSSGYKRVVESHYLQQITETVVRTVNTVFEVAAFELQHHKEEHFLVMVVESSLAKTEEESKNGETTDTTLMKFAETQRNKLETKMNDLTDQIFRILWIFHKIQPMCILVVPRDTLPRRYCSLELANSTVEKKFLNNDLSAQFVKFQFDNVILDFLPHSAYYNESILSEHLSKLRKMALQEEYAMIEPAYRNGGPVKPKLALQCSGVDYRDESVDTRSHTKLTDFKSILEILEWRISNYGNETAFSDGTNTNLVNSSASNDNNVHKKVSWASFGKIVAGFLKKIVGSKIPLKHGDPIIIMCENSVEYVAMIMACLYCNLLVIPLPSVKESVIEEDLKGLVNIIQSYKVKRVFVDAKLHSLLNDNNVVNKCFKKYKSLIPKITVFSKVKTKNALTVSMFKNVLKQKFGAKPGTRIGMTPCVVWVNTEYDVTSNIHVTMTHSSLLNASKIVKETLQLRNNSPLFSICSHTSGLGFMFSCLLGIYTGASTCLFSLTDVLTDPKEFLIGLQNLNVKDLYLKLETLYALLDRASSLIEGFKNKKENINSAKNNTSGSLREDVFKGVRNIMIPFPNRPRIYTIENILKRYSTISLSCTQISYVYQHHFNPLISLRSYLDIPPVDLYLDPFSLREGIIREVNPNDVSAGNYIKIQDSGVVPVCTDVSVVNPETLLPCVDGEFGEIWCCSEANAFDYFVCNSSKNKLYKDPFITEQFKSKMKSEVNNTLSYLRTGDLGFIKNVSCTNSQGEVVNLNLLFVLGSIHESIEILGLTHFVSDLERTVKDVHSDIGSCLIAKAGGLLVCLIRCKERHNPILGNLTTLIVSELLNKHGVILDLCTFVRTKGISPKNSSMIMEVWAKNRASIMQAWFDQKIQIEAQFGINYGENISIYLLSDYEKDNI.

Residues Ile-5–Ser-101 form the DMAP1-binding domain. N-linked (GlcNAc...) asparagine glycosylation is found at Asn-28, Asn-71, and Asn-98. Disordered regions lie at residues Pro-52–Ser-73 and Thr-96–Ser-130. Positions Asn-60–Asn-71 are enriched in basic residues. 2 stretches are compositionally biased toward polar residues: residues Thr-96–Thr-105 and Tyr-113–Asn-128. A Phosphoserine modification is found at Ser-99. N-linked (GlcNAc...) asparagine glycans are attached at residues Asn-128, Asn-151, and Asn-209. The fatty acyl-AMP ligase-like domain 1 stretch occupies residues Ala-158 to Leu-893. The chain crosses the membrane as a helical span at residues Val-228–Val-248. N-linked (GlcNAc...) asparagine glycans are attached at residues Asn-288, Asn-328, Asn-575, Asn-644, and Asn-730. Position 751 is a phosphoserine (Ser-751). Asn-881, Asn-917, Asn-995, and Asn-1009 each carry an N-linked (GlcNAc...) asparagine glycan. Residues Val-950–Ile-1648 form a fatty acyl-AMP ligase-like domain 2 region. Residues Tyr-1061 to Val-1081 traverse the membrane as a helical segment. Asn-1198 is a glycosylation site (N-linked (GlcNAc...) asparagine). The helical transmembrane segment at Gly-1224–Phe-1244 threads the bilayer. 8 N-linked (GlcNAc...) asparagine glycosylation sites follow: Asn-1301, Asn-1302, Asn-1447, Asn-1472, Asn-1488, Asn-1565, Asn-1597, and Asn-1634.

It localises to the vacuole membrane. The protein localises to the mitochondrion membrane. Its function is as follows. Homeostatic regulator of a chemically distinct subset of diacylglycerols (DAGs) with C36 chain length that prevents the toxic accumulation of these specific DAGs in the logarithmic growth phase, which otherwise leads to endoplasmic reticulum stress. Maintains the basal level of DAG subspecies by directly facilitating DAG to triacylglycerol (TAG) conversion process, possibly via adenylation activity of its FLD domains. Does not affect the abundant DAG species (representing over 90% of total DAG pool), comprised of C32 and C34 chain lengths. Required for vacuole fusion-mediated osmoadaptation. This is Homeostatic regulator of DAG from Saccharomyces cerevisiae (strain ATCC 204508 / S288c) (Baker's yeast).